Consider the following 118-residue polypeptide: UPF0295 protein BCG9842_B4782 (118 aa).

Transmembrane regions (helical) follow at residues 12–32 and 43–63; these read IRTF…LGVF and FMMV…WIGM.

Belongs to the UPF0295 family.

It is found in the cell membrane. This is UPF0295 protein BCG9842_B4782 from Bacillus cereus (strain G9842).